The chain runs to 153 residues: Aspartate carbamoyltransferase regulatory chain (153 aa).

Zn(2+)-binding residues include cysteine 109, cysteine 114, cysteine 138, and cysteine 141.

This sequence belongs to the PyrI family. In terms of assembly, contains catalytic and regulatory chains. Zn(2+) is required as a cofactor.

Involved in allosteric regulation of aspartate carbamoyltransferase. The protein is Aspartate carbamoyltransferase regulatory chain of Vibrio campbellii (strain ATCC BAA-1116).